The chain runs to 756 residues: Pro-neuregulin-2, membrane-bound isoform (756 aa).

Positions 1 to 19 (MRRDPAPGFSMLLFGVSLA) are excised as a propeptide. Residues 20-315 (CYSPSLKSVQ…KEAEELYQKR (296 aa)) lie on the Extracellular side of the membrane. 3 N-linked (GlcNAc...) asparagine glycosylation sites follow: Asn55, Asn186, and Asn254. One can recognise an Ig-like C2-type domain in the interval 145-240 (PKLKKMKSQT…RGRLHVNSVS (96 aa)). 4 disulfide bridges follow: Cys165/Cys219, Cys253/Cys267, Cys261/Cys278, and Cys280/Cys289. Residues 249–290 (HARKCNETAKSYCVNGGVCYYIEGINQLSCKCPVGYTGDRCQ) form the EGF-like domain. The N-linked (GlcNAc...) asparagine glycan is linked to Asn296. A helical membrane pass occupies residues 316–336 (VLTITGICVALLVVGIVCVVA). The Cytoplasmic portion of the chain corresponds to 337-756 (YCKTKKQRRQ…TRAKQDSGPL (420 aa)). Disordered stretches follow at residues 402–439 (TFSG…SESL), 557–578 (LLRH…DMQR), 608–694 (ASPF…DGAL), and 711–756 (LRSD…SGPL). Over residues 404–416 (SGSHSCSPSHHCS) the composition is skewed to low complexity. The segment covering 424 to 437 (HRHESHTWSLERSE) has biased composition (basic and acidic residues). Positions 654–682 (LNGLAAQRARAARDSLSLSSGSGCGSASA) are enriched in low complexity.

The protein belongs to the neuregulin family. In terms of assembly, interacts with ERBB3 and ERBB4. In terms of processing, proteolytic cleavage close to the plasma membrane on the external face leads to the release of the soluble growth factor form. Extensive glycosylation precedes the proteolytic cleavage. As to expression, highest expression in the brain, with lower levels in the lung. In the cerebellum, found in granule and Purkinje cells.

The protein resides in the cell membrane. Its subcellular location is the secreted. Direct ligand for ERBB3 and ERBB4 tyrosine kinase receptors. Concomitantly recruits ERBB1 and ERBB2 coreceptors, resulting in ligand-stimulated tyrosine phosphorylation and activation of the ERBB receptors. May also promote the heterodimerization with the EGF receptor. This chain is Pro-neuregulin-2, membrane-bound isoform (Nrg2), found in Mus musculus (Mouse).